The primary structure comprises 166 residues: MSLLTPDSGLLFWMVIVFGIVFVILAKYGFPVITRMVDERKQYIDKSLLAAREANEQLANIKADSEMILAKAHEEQARILNEAVATRERILKEAKTQAQVEGQKLLDEAKKQIQAEKDSAISDIRRQVAVLSVDIAEKVLRKNLDDEKEQMEMIDRLLDELTVSKD.

Residues leucine 10–phenylalanine 30 form a helical membrane-spanning segment.

This sequence belongs to the ATPase B chain family. F-type ATPases have 2 components, F(1) - the catalytic core - and F(0) - the membrane proton channel. F(1) has five subunits: alpha(3), beta(3), gamma(1), delta(1), epsilon(1). F(0) has three main subunits: a(1), b(2) and c(10-14). The alpha and beta chains form an alternating ring which encloses part of the gamma chain. F(1) is attached to F(0) by a central stalk formed by the gamma and epsilon chains, while a peripheral stalk is formed by the delta and b chains.

The protein localises to the cell inner membrane. In terms of biological role, f(1)F(0) ATP synthase produces ATP from ADP in the presence of a proton or sodium gradient. F-type ATPases consist of two structural domains, F(1) containing the extramembraneous catalytic core and F(0) containing the membrane proton channel, linked together by a central stalk and a peripheral stalk. During catalysis, ATP synthesis in the catalytic domain of F(1) is coupled via a rotary mechanism of the central stalk subunits to proton translocation. Its function is as follows. Component of the F(0) channel, it forms part of the peripheral stalk, linking F(1) to F(0). This Phocaeicola vulgatus (strain ATCC 8482 / DSM 1447 / JCM 5826 / CCUG 4940 / NBRC 14291 / NCTC 11154) (Bacteroides vulgatus) protein is ATP synthase subunit b.